The chain runs to 662 residues: DNA ligase (662 aa).

NAD(+) contacts are provided by residues 32–36, 75–76, and glutamate 106; these read DAEYD and SL. Lysine 108 acts as the N6-AMP-lysine intermediate in catalysis. Positions 129, 164, 271, and 295 each coordinate NAD(+). Residues cysteine 389, cysteine 392, cysteine 407, and cysteine 413 each coordinate Zn(2+). One can recognise a BRCT domain in the interval 580–662; it reads SSNSVLNNKI…HKVISLGVFK (83 aa).

This sequence belongs to the NAD-dependent DNA ligase family. LigA subfamily. Mg(2+) is required as a cofactor. It depends on Mn(2+) as a cofactor.

The enzyme catalyses NAD(+) + (deoxyribonucleotide)n-3'-hydroxyl + 5'-phospho-(deoxyribonucleotide)m = (deoxyribonucleotide)n+m + AMP + beta-nicotinamide D-nucleotide.. Its function is as follows. DNA ligase that catalyzes the formation of phosphodiester linkages between 5'-phosphoryl and 3'-hydroxyl groups in double-stranded DNA using NAD as a coenzyme and as the energy source for the reaction. It is essential for DNA replication and repair of damaged DNA. This is DNA ligase from Wolbachia pipientis wMel.